We begin with the raw amino-acid sequence, 418 residues long: Tyrosine--tRNA ligase (418 aa).

Tyr-34 is an L-tyrosine binding site. Residues 39–48 carry the 'HIGH' region motif; that stretch reads PTADSLHLGH. Positions 169 and 173 each coordinate L-tyrosine. Positions 229-233 match the 'KMSKS' region motif; the sequence is KFGKS. Residue Lys-232 coordinates ATP. Positions 352 to 418 constitute an S4 RNA-binding domain; that stretch reads NNIVELLVSS…GKKKYFVLTY (67 aa).

It belongs to the class-I aminoacyl-tRNA synthetase family. TyrS type 1 subfamily. In terms of assembly, homodimer.

The protein resides in the cytoplasm. It catalyses the reaction tRNA(Tyr) + L-tyrosine + ATP = L-tyrosyl-tRNA(Tyr) + AMP + diphosphate + H(+). Catalyzes the attachment of tyrosine to tRNA(Tyr) in a two-step reaction: tyrosine is first activated by ATP to form Tyr-AMP and then transferred to the acceptor end of tRNA(Tyr). The chain is Tyrosine--tRNA ligase from Streptococcus pneumoniae serotype 19F (strain G54).